The chain runs to 215 residues: Pyrrolidone-carboxylate peptidase (215 aa).

Active-site residues include Glu80, Cys143, and His167.

It belongs to the peptidase C15 family. In terms of assembly, homotetramer.

The protein localises to the cytoplasm. It catalyses the reaction Release of an N-terminal pyroglutamyl group from a polypeptide, the second amino acid generally not being Pro.. Removes 5-oxoproline from various penultimate amino acid residues except L-proline. The protein is Pyrrolidone-carboxylate peptidase of Bacillus cereus (strain Q1).